A 358-amino-acid polypeptide reads, in one-letter code: Fructose-bisphosphate aldolase (358 aa).

Position 61 (serine 61) interacts with D-glyceraldehyde 3-phosphate. Aspartate 108 acts as the Proton donor in catalysis. Residues histidine 109, aspartate 143, glutamate 173, and histidine 225 each contribute to the Zn(2+) site. Glycine 226 contacts dihydroxyacetone phosphate. Histidine 264 lines the Zn(2+) pocket. Dihydroxyacetone phosphate is bound by residues 265 to 267 (GGS) and 286 to 289 (NIDT). Phosphothreonine is present on residues threonine 289, threonine 312, threonine 340, and threonine 342.

This sequence belongs to the class II fructose-bisphosphate aldolase family. As to quaternary structure, homodimer. Zn(2+) serves as cofactor.

The catalysed reaction is beta-D-fructose 1,6-bisphosphate = D-glyceraldehyde 3-phosphate + dihydroxyacetone phosphate. It participates in carbohydrate degradation; glycolysis; D-glyceraldehyde 3-phosphate and glycerone phosphate from D-glucose: step 4/4. Its function is as follows. Catalyzes the aldol condensation of dihydroxyacetone phosphate (DHAP or glycerone-phosphate) with glyceraldehyde 3-phosphate (G3P) to form fructose 1,6-bisphosphate (FBP) in gluconeogenesis and the reverse reaction in glycolysis. This Schizosaccharomyces pombe (strain 972 / ATCC 24843) (Fission yeast) protein is Fructose-bisphosphate aldolase (fba1).